The sequence spans 504 residues: Maturase K (504 aa).

Belongs to the intron maturase 2 family. MatK subfamily.

Its subcellular location is the plastid. The protein resides in the chloroplast. Usually encoded in the trnK tRNA gene intron. Probably assists in splicing its own and other chloroplast group II introns. This chain is Maturase K, found in Capsella bursa-pastoris (Shepherd's purse).